The following is a 285-amino-acid chain: UPF0354 protein MW1686 (285 aa).

It belongs to the UPF0354 family.

The sequence is that of UPF0354 protein MW1686 from Staphylococcus aureus (strain MW2).